The following is a 241-amino-acid chain: Superoxide dismutase [Mn] 2, mitochondrial (241 aa).

Residues His-60, His-108, Asp-197, and His-201 each contribute to the Mn(2+) site.

This sequence belongs to the iron/manganese superoxide dismutase family. Homotetramer. It depends on Mn(2+) as a cofactor.

It is found in the mitochondrion matrix. The enzyme catalyses 2 superoxide + 2 H(+) = H2O2 + O2. Functionally, destroys superoxide anion radicals which are normally produced within the cells and which are toxic to biological systems. The sequence is that of Superoxide dismutase [Mn] 2, mitochondrial (MSD2) from Arabidopsis thaliana (Mouse-ear cress).